The primary structure comprises 540 residues: Probable LRR receptor-like serine/threonine-protein kinase RPK1 (540 aa).

A signal peptide spans 1–19 (MKLLGLVFLLFNLFMFSFS). At 20 to 198 (RKLLTESGGG…PGKSGLYPIE (179 aa)) the chain is on the extracellular side. LRR repeat units lie at residues 118 to 142 (LSEIRVLSLSFNDLRGEIPKEIWGL) and 144 to 169 (KLEILDLKGNNFIGGIRVVDNVVLRK). The helical transmembrane segment at 199-219 (IASIVSASVIVFVLLVLVILF) threads the bilayer. Topologically, residues 220 to 540 (IYTRKWKRNS…LLKRIQPSRL (321 aa)) are cytoplasmic. 2 positions are modified to phosphothreonine: T250 and T258. Positions 261-535 (FSNSNCIGHG…KQAVRLLKRI (275 aa)) constitute a Protein kinase domain. Residues 267–275 (IGHGGFGST) and K289 each bind ATP. A phosphotyrosine mark is found at Y334 and Y372. D385 (proton acceptor) is an active-site residue. Phosphotyrosine is present on Y427. Residue T435 is modified to Phosphothreonine.

Belongs to the protein kinase superfamily. Ser/Thr protein kinase family. Expressed in roots, stems, leaves, and flowers.

It localises to the cell membrane. The catalysed reaction is L-seryl-[protein] + ATP = O-phospho-L-seryl-[protein] + ADP + H(+). It catalyses the reaction L-threonyl-[protein] + ATP = O-phospho-L-threonyl-[protein] + ADP + H(+). In terms of biological role, involved in the main abscisic acid-mediated (ABA) signaling pathway and in early ABA perception. Together with RPK2, required for pattern formation along the radial axis (e.g. the apical embryonic domain cell types that generate cotyledon primordia), and the apical-basal axis (e.g. differentiation of the basal pole during early embryogenesis). The chain is Probable LRR receptor-like serine/threonine-protein kinase RPK1 (RPK1) from Arabidopsis thaliana (Mouse-ear cress).